We begin with the raw amino-acid sequence, 214 residues long: Thymidylate kinase (214 aa).

Residue 10–17 (GGEGAGKS) participates in ATP binding.

The protein belongs to the thymidylate kinase family.

It carries out the reaction dTMP + ATP = dTDP + ADP. In terms of biological role, phosphorylation of dTMP to form dTDP in both de novo and salvage pathways of dTTP synthesis. This chain is Thymidylate kinase, found in Brucella suis biovar 1 (strain 1330).